Here is a 315-residue protein sequence, read N- to C-terminus: FGFR1 oncogene partner 2 homolog (315 aa).

Coiled-coil stretches lie at residues 32–99 (EEAE…RAME) and 156–183 (VVQR…ISKQ). Disordered regions lie at residues 201-222 (KAVQ…SGAS) and 238-315 (PEQP…APAT). Residues 246 to 269 (GTTNSFNTAPVHSQSETQAPSVTL) are compositionally biased toward polar residues.

This sequence belongs to the SIKE family.

This Drosophila melanogaster (Fruit fly) protein is FGFR1 oncogene partner 2 homolog.